Here is a 451-residue protein sequence, read N- to C-terminus: uncharacterized protein (451 aa).

Disordered stretches follow at residues 89–150 (PRLS…ISRY) and 164–222 (QVGE…KTFG). A compositionally biased stretch (polar residues) spans 104-121 (QKPTISRESFVWESSASI). Positions 137 to 147 (SSTPSIEPESI) are enriched in low complexity. Positions 175–222 (RAADSENERRPSEVREAPESRRRRETSETGSDKSKAPPPIKEIKKTFG) are enriched in basic and acidic residues. Residues 358–376 (LIGLMLFQTTIFIISKIIA) form a helical membrane-spanning segment. The interval 401–451 (RNGSSSGFASGTSSPLVFIPRTKRPSLVPSEKKMRGPSVTRDLAAEQERDA) is disordered. The segment covering 403 to 414 (GSSSGFASGTSS) has biased composition (low complexity).

It belongs to the IIV-6 067R family.

It is found in the membrane. This is an uncharacterized protein from Invertebrate iridescent virus 3 (IIV-3).